Reading from the N-terminus, the 89-residue chain is UPF0335 protein CCNA_03428 (89 aa).

It belongs to the UPF0335 family.

The protein is UPF0335 protein CCNA_03428 of Caulobacter vibrioides (strain NA1000 / CB15N) (Caulobacter crescentus).